The following is a 205-amino-acid chain: Molybdenum cofactor guanylyltransferase (205 aa).

GTP-binding positions include 14 to 16 (LAG), lysine 27, aspartate 77, and aspartate 107. Aspartate 107 contributes to the Mg(2+) binding site.

Belongs to the MobA family. As to quaternary structure, monomer. Mg(2+) serves as cofactor.

It is found in the cytoplasm. It catalyses the reaction Mo-molybdopterin + GTP + H(+) = Mo-molybdopterin guanine dinucleotide + diphosphate. In terms of biological role, transfers a GMP moiety from GTP to Mo-molybdopterin (Mo-MPT) cofactor (Moco or molybdenum cofactor) to form Mo-molybdopterin guanine dinucleotide (Mo-MGD) cofactor. The sequence is that of Molybdenum cofactor guanylyltransferase from Burkholderia cenocepacia (strain HI2424).